A 274-amino-acid polypeptide reads, in one-letter code: Diaminopimelate epimerase (274 aa).

Asn11, Gln44, and Asn64 together coordinate substrate. The Proton donor role is filled by Cys73. Residues 74 to 75 (GN), Asn157, Asn190, and 208 to 209 (ER) each bind substrate. Cys217 functions as the Proton acceptor in the catalytic mechanism. 218-219 (GS) lines the substrate pocket.

It belongs to the diaminopimelate epimerase family. Homodimer.

It localises to the cytoplasm. The enzyme catalyses (2S,6S)-2,6-diaminopimelate = meso-2,6-diaminopimelate. It participates in amino-acid biosynthesis; L-lysine biosynthesis via DAP pathway; DL-2,6-diaminopimelate from LL-2,6-diaminopimelate: step 1/1. Catalyzes the stereoinversion of LL-2,6-diaminopimelate (L,L-DAP) to meso-diaminopimelate (meso-DAP), a precursor of L-lysine and an essential component of the bacterial peptidoglycan. This Erwinia tasmaniensis (strain DSM 17950 / CFBP 7177 / CIP 109463 / NCPPB 4357 / Et1/99) protein is Diaminopimelate epimerase.